The following is a 435-amino-acid chain: Enolase (435 aa).

Residue Gln-163 coordinates (2R)-2-phosphoglycerate. Glu-205 functions as the Proton donor in the catalytic mechanism. The Mg(2+) site is built by Asp-243, Glu-292, and Asp-319. Residues Lys-344, Arg-373, Ser-374, and Lys-395 each coordinate (2R)-2-phosphoglycerate. The active-site Proton acceptor is the Lys-344.

Belongs to the enolase family. Homooctamer, a tetramer of homodimers. Requires Mg(2+) as cofactor.

The protein resides in the cytoplasm. Its subcellular location is the secreted. It localises to the cell surface. The protein localises to the cell wall. The catalysed reaction is (2R)-2-phosphoglycerate = phosphoenolpyruvate + H2O. Its pathway is carbohydrate degradation; glycolysis; pyruvate from D-glyceraldehyde 3-phosphate: step 4/5. Functionally, catalyzes the reversible conversion of 2-phosphoglycerate (2-PG) into phosphoenolpyruvate (PEP). It is essential for the degradation of carbohydrates via glycolysis. In terms of biological role, 'Moonlights' as a plasminogen receptor. Binds plasminogen and more weakly plasmin when expressed on the bacterial cell surface; probably has more than one plasmin(ogen) binding site, may bind via Lys residues. Plasminogen binding potentially allows the bacterium to acquire surface-associated proteolytic activity, which in turn contributes to tissue invasion and virulence. This Streptococcus pyogenes serotype M6 (strain ATCC BAA-946 / MGAS10394) protein is Enolase.